A 324-amino-acid chain; its full sequence is Mevalonate kinase (324 aa).

Residue 103-113 participates in ATP binding; sequence PPRAGLGSSAA. The active-site Proton acceptor is the aspartate 154.

Belongs to the GHMP kinase family. Mevalonate kinase subfamily. As to quaternary structure, homodimer. Mg(2+) is required as a cofactor.

The protein localises to the cytoplasm. It catalyses the reaction (R)-mevalonate + ATP = (R)-5-phosphomevalonate + ADP + H(+). Its pathway is isoprenoid biosynthesis; isopentenyl diphosphate biosynthesis via mevalonate pathway; isopentenyl diphosphate from (R)-mevalonate: step 1/3. Catalyzes the phosphorylation of (R)-mevalonate (MVA) to (R)-mevalonate 5-phosphate (MVAP). Functions in the mevalonate (MVA) pathway leading to isopentenyl diphosphate (IPP), a key precursor for the biosynthesis of isoprenoid compounds such as archaeal membrane lipids. The protein is Mevalonate kinase of Aeropyrum pernix (strain ATCC 700893 / DSM 11879 / JCM 9820 / NBRC 100138 / K1).